A 388-amino-acid chain; its full sequence is Chaperone protein DnaJ (388 aa).

Positions 6-71 (DYYEILGVPR…EKRKLYDQFG (66 aa)) constitute a J domain. A CR-type zinc finger spans residues 147–229 (GCEKEIPIYR…CGGTGNVRRQ (83 aa)). Residues Cys-160, Cys-163, Cys-177, Cys-180, Cys-203, Cys-206, Cys-217, and Cys-220 each contribute to the Zn(2+) site. 4 CXXCXGXG motif repeats span residues 160–167 (CSVCGGSG), 177–184 (CQKCGGTG), 203–210 (CDACGGTG), and 217–224 (CRECGGTG).

This sequence belongs to the DnaJ family. Homodimer. Zn(2+) is required as a cofactor.

Its subcellular location is the cytoplasm. Participates actively in the response to hyperosmotic and heat shock by preventing the aggregation of stress-denatured proteins and by disaggregating proteins, also in an autonomous, DnaK-independent fashion. Unfolded proteins bind initially to DnaJ; upon interaction with the DnaJ-bound protein, DnaK hydrolyzes its bound ATP, resulting in the formation of a stable complex. GrpE releases ADP from DnaK; ATP binding to DnaK triggers the release of the substrate protein, thus completing the reaction cycle. Several rounds of ATP-dependent interactions between DnaJ, DnaK and GrpE are required for fully efficient folding. Also involved, together with DnaK and GrpE, in the DNA replication of plasmids through activation of initiation proteins. The protein is Chaperone protein DnaJ of Caldicellulosiruptor bescii (strain ATCC BAA-1888 / DSM 6725 / KCTC 15123 / Z-1320) (Anaerocellum thermophilum).